Consider the following 128-residue polypeptide: Gastrotropin (128 aa).

Residue Ala-2 is modified to N-acetylalanine.

This sequence belongs to the calycin superfamily. Fatty-acid binding protein (FABP) family. As to expression, expressed in ovary granulosa and luteal cells.

It localises to the cytoplasm. The protein localises to the membrane. Binds to bile acids and is involved in enterohepatic bile acid metabolism. Required for efficient apical to basolateral transport of conjugated bile acids in ileal enterocytes. Stimulates gastric acid and pepsinogen secretion. The chain is Gastrotropin (Fabp6) from Mus musculus (Mouse).